A 217-amino-acid chain; its full sequence is Lectin ADEL (217 aa).

5 cysteine pairs are disulfide-bonded: Cys5-Cys187, Cys42-Cys68, Cys61-Cys77, Cys114-Cys135, and Cys142-Cys206. Asn30 carries an N-linked (GlcNAc...) asparagine glycan. N-linked (GlcNAc...) asparagine glycosylation is found at Asn102 and Asn126.

In terms of assembly, homodimer; disulfide-linked. Contains disulfide bonds.

Its function is as follows. Binds in decreasing order of affinity: galacturonic acid, D-galactosamine, methyl-alpha-D-galactopyranoside and further galactose-containing carbohydrates. Has hemagglutinating activity against human and rabbit erythrocytes. This chain is Lectin ADEL, found in Aplysia dactylomela (Spotted sea hare).